The following is a 301-amino-acid chain: Protease HtpX (301 aa).

Helical transmembrane passes span 4 to 24 and 38 to 58; these read IGLF…ILSL and LGNL…ISLL. His-147 contributes to the Zn(2+) binding site. Glu-148 is a catalytic residue. His-151 contributes to the Zn(2+) binding site. 2 helical membrane passes run 155–175 and 200–220; these read GDMV…MFFA and FAIT…IVMW. Glu-226 lines the Zn(2+) pocket.

This sequence belongs to the peptidase M48B family. Requires Zn(2+) as cofactor.

The protein resides in the cell inner membrane. The protein is Protease HtpX of Acinetobacter baylyi (strain ATCC 33305 / BD413 / ADP1).